The primary structure comprises 1220 residues: MGDMANSSIEFHPKPQQQRDVPQAGGFGCTLAELRTLMELRGAEALQKIEEAYGDVSGLCRRLKTSPTEGLADNTNDLEKRRQIYGQNFIPPKQPKTFLQLVWEALQDVTLIILEVAAIVSLGLSFYAPPGEESEACGNVSGGAEDEGEAEAGWIEGAAILLSVICVVLVTAFNDWSKEKQFRGLQSRIEQEQKFTVIRNGQLLQVPVAALVVGDIAQVKYGDLLPADGVLIQANDLKIDESSLTGESDHVRKSADKDPMLLSGTHVMEGSGRMVVTAVGVNSQTGIIFTLLGAGGEEEEKKDKKGKQQDGAMESSQTKAKKQDGAVAMEMQPLKSAEGGEMEEREKKKANAPKKEKSVLQGKLTKLAVQIGKAGLVMSAITVIILVLYFVIETFVVEGRTWLAECTPVYVQYFVKFFIIGVTVLVVAVPEGLPLAVTISLAYSVKKMMKDNNLVRHLDACETMGNATAICSDKTGTLTTNRMTVVQSYLGDTHYKEIPAPSALTPKILDLLVHAISINSAYTTKILPPEKEGALPRQVGNKTECALLGFVLDLKRDFQPVREQIPEDKLYKVYTFNSVRKSMSTVIRMPDGGFRLFSKGASEILLKKCTNILNSNGELRGFRPRDRDDMVRKIIEPMACDGLRTICIAYRDFSAGQEPDWDNENEVVGDLTCIAVVGIEDPVRPEVPEAIRKCQRAGITVRMVTGDNINTARAIAAKCGIIQPGEDFLCLEGKEFNRRIRNEKGEIEQERLDKVWPKLRVLARSSPTDKHTLVKGIIDSTTGEQRQVVAVTGDGTNDGPALKKADVGFAMGIAGTDVAKEASDIILTDDNFTSIVKAVMWGRNVYDSISKFLQFQLTVNVVAVIVAFTGACITQDSPLKAVQMLWVNLIMDTFASLALATEPPTESLLLRKPYGRDKPLISRTMMKNILGHAVYQLAIIFTLLFVGELFFDIDSGRNAPLHSPPSEHYTIIFNTFVMMQLFNEINARKIHGERNVFDGIFSNPIFCTIVLGTFGIQIVIVQFGGKPFSCSPLSTEQWLWCLFVGVGELVWGQVIATIPTSQLKCLKEAGHGPGKDEMTDEELAEGEEEIDHAERELRRGQILWFRGLNRIQTQIRVVKAFRSSLYEGLEKPESKTSIHNFMATPEFLINDYTHNIPLIDDTDVDENEERLRAPPPPSPNQNNNAIDSGIYLTTHVTKSATSSVFSSSPGSPLHSVETSL.

A compositionally biased stretch (polar residues) spans 1–20 (MGDMANSSIEFHPKPQQQRD). The tract at residues 1–23 (MGDMANSSIEFHPKPQQQRDVPQ) is disordered. Residues 1-97 (MGDMANSSIE…NFIPPKQPKT (97 aa)) lie on the Cytoplasmic side of the membrane. Serine 8 carries the post-translational modification Phosphoserine. Residues 98 to 118 (FLQLVWEALQDVTLIILEVAA) form a helical membrane-spanning segment. The Extracellular segment spans residues 119–155 (IVSLGLSFYAPPGEESEACGNVSGGAEDEGEAEAGWI). Residues 156–176 (EGAAILLSVICVVLVTAFNDW) form a helical membrane-spanning segment. At 177–364 (SKEKQFRGLQ…KEKSVLQGKL (188 aa)) the chain is on the cytoplasmic side. Positions 298-355 (EEEKKDKKGKQQDGAMESSQTKAKKQDGAVAMEMQPLKSAEGGEMEEREKKKANAPKK) are disordered. 2 stretches are compositionally biased toward basic and acidic residues: residues 299–308 (EEKKDKKGKQ) and 342–355 (MEEREKKKANAPKK). Residues 365–384 (TKLAVQIGKAGLVMSAITVI) traverse the membrane as a helical segment. Residues 385–417 (ILVLYFVIETFVVEGRTWLAECTPVYVQYFVKF) are Extracellular-facing. Residues 418–435 (FIIGVTVLVVAVPEGLPL) form a helical membrane-spanning segment. Residues 436–849 (AVTISLAYSV…MWGRNVYDSI (414 aa)) lie on the Cytoplasmic side of the membrane. The active-site 4-aspartylphosphate intermediate is the aspartate 473. Mg(2+) contacts are provided by aspartate 794 and aspartate 798. A helical transmembrane segment spans residues 850–869 (SKFLQFQLTVNVVAVIVAFT). Residues 870–879 (GACITQDSPL) are Extracellular-facing. A helical transmembrane segment spans residues 880 to 900 (KAVQMLWVNLIMDTFASLALA). The Cytoplasmic portion of the chain corresponds to 901–920 (TEPPTESLLLRKPYGRDKPL). The helical transmembrane segment at 921 to 943 (ISRTMMKNILGHAVYQLAIIFTL) threads the bilayer. At 944–961 (LFVGELFFDIDSGRNAPL) the chain is on the extracellular side. Residues 962–983 (HSPPSEHYTIIFNTFVMMQLFN) traverse the membrane as a helical segment. The Cytoplasmic segment spans residues 984-1002 (EINARKIHGERNVFDGIFS). The helical transmembrane segment at 1003-1024 (NPIFCTIVLGTFGIQIVIVQFG) threads the bilayer. At 1025 to 1034 (GKPFSCSPLS) the chain is on the extracellular side. A helical membrane pass occupies residues 1035-1056 (TEQWLWCLFVGVGELVWGQVIA). Topologically, residues 1057–1220 (TIPTSQLKCL…SPLHSVETSL (164 aa)) are cytoplasmic. Threonine 1079 is subject to Phosphothreonine. Residues 1097–1114 (LRRGQILWFRGLNRIQTQ) are calmodulin-binding subdomain A. Threonine 1113 is subject to Phosphothreonine; by PKC. The interval 1115 to 1124 (IRVVKAFRSS) is calmodulin-binding subdomain B. The disordered stretch occupies residues 1166-1186 (ENEERLRAPPPPSPNQNNNAI).

The protein belongs to the cation transport ATPase (P-type) (TC 3.A.3) family. Type IIB subfamily. As to quaternary structure, interacts with PDZD11. Interacts (via N-terminus) with YWHAE. As to expression, highly expressed in the cerebellum. Expressed in adrenal glands.

Its subcellular location is the cell membrane. It localises to the presynaptic cell membrane. It catalyses the reaction Ca(2+)(in) + ATP + H2O = Ca(2+)(out) + ADP + phosphate + H(+). Its activity is regulated as follows. Down-regulated by YWHAE. ATP-driven Ca(2+) ion pump involved in the maintenance of basal intracellular Ca(2+) levels at the presynaptic terminals. Uses ATP as an energy source to transport cytosolic Ca(2+) ions across the plasma membrane to the extracellular compartment. May counter-transport protons, but the mechanism and the stoichiometry of this Ca(2+)/H(+) exchange remains to be established. The sequence is that of Plasma membrane calcium-transporting ATPase 3 from Homo sapiens (Human).